The chain runs to 57 residues: Large ribosomal subunit protein bL33 (57 aa).

Belongs to the bacterial ribosomal protein bL33 family.

This is Large ribosomal subunit protein bL33 from Shewanella pealeana (strain ATCC 700345 / ANG-SQ1).